The primary structure comprises 353 residues: Mitochondrial import inner membrane translocase subunit TIM50 (353 aa).

The N-terminal 44 residues, 1–44, are a transit peptide targeting the mitochondrion; the sequence is MAASAAVFSRLRSGLRLGSRGLCTRLATPPRRAPDQAAEIGSRG. Positions 25–60 are disordered; the sequence is RLATPPRRAPDQAAEIGSRGSTKAQGPQQQPGSEGP. Serine 45 is modified (phosphoserine). Residues 45–65 lie on the Mitochondrial matrix side of the membrane; the sequence is STKAQGPQQQPGSEGPSYAKK. The span at 49-60 shows a compositional bias: low complexity; sequence QGPQQQPGSEGP. The chain crosses the membrane as a helical span at residues 66-86; that stretch reads VALWLAGLLGAGGTVSVVYIF. Residues 87-353 lie on the Mitochondrial intermembrane side of the membrane; it reads GNNPVDENGA…SRLWPRSKQP (267 aa). Positions 143–286 constitute an FCP1 homology domain; sequence YYQPPYTLVL…LDLSAFLKTI (144 aa). Serine 341 carries the post-translational modification Phosphoserine.

This sequence belongs to the TIM50 family. In terms of assembly, component of the TIM23 complex at least composed of TIMM23, TIMM17 (TIMM17A or TIMM17B) and TIMM50; within this complex, directly interacts with TIMM23. The complex interacts with the TIMM44 component of the PAM complex and with DNAJC15. As to quaternary structure, interacts with COIL and snRNPs. As to expression, widely expressed. Expressed at higher level in brain, kidney and liver (at protein level).

It is found in the mitochondrion inner membrane. The protein resides in the nucleus speckle. Its function is as follows. Essential component of the TIM23 complex, a complex that mediates the translocation of transit peptide-containing proteins across the mitochondrial inner membrane. Has some phosphatase activity in vitro; however such activity may not be relevant in vivo. Functionally, may participate in the release of snRNPs and SMN from the Cajal body. This Homo sapiens (Human) protein is Mitochondrial import inner membrane translocase subunit TIM50 (TIMM50).